We begin with the raw amino-acid sequence, 244 residues long: Proteasome subunit alpha 2 (244 aa).

The protein belongs to the peptidase T1A family. In terms of assembly, the 20S proteasome core is composed of 14 alpha and 14 beta subunits that assemble into four stacked heptameric rings, resulting in a barrel-shaped structure. The two inner rings, each composed of seven catalytic beta subunits, are sandwiched by two outer rings, each composed of seven alpha subunits. The catalytic chamber with the active sites is on the inside of the barrel. Has a gated structure, the ends of the cylinder being occluded by the N-termini of the alpha-subunits. Is capped at one or both ends by the proteasome regulatory ATPase, PAN.

The protein resides in the cytoplasm. Its activity is regulated as follows. The formation of the proteasomal ATPase PAN-20S proteasome complex, via the docking of the C-termini of PAN into the intersubunit pockets in the alpha-rings, triggers opening of the gate for substrate entry. Interconversion between the open-gate and close-gate conformations leads to a dynamic regulation of the 20S proteasome proteolysis activity. Component of the proteasome core, a large protease complex with broad specificity involved in protein degradation. The sequence is that of Proteasome subunit alpha 2 from Haloarcula marismortui (strain ATCC 43049 / DSM 3752 / JCM 8966 / VKM B-1809) (Halobacterium marismortui).